Consider the following 339-residue polypeptide: Annexin A2 (339 aa).

Ser2 is modified (N-acetylserine). The interval 2-24 (STVHEILSKLSLEGDHSLPPSAY) is S100A10-binding site. Tyr24 bears the Phosphotyrosine; by SRC mark. Thr26 carries the phosphothreonine; by PKC modification. Annexin repeat units lie at residues 33 to 104 (FDAD…GLLK), 105 to 176 (TPSQ…ALAK), 189 to 261 (ELID…NLVQ), and 265 to 336 (NKQL…NLCG).

Belongs to the annexin family. In terms of assembly, heterotetramer containing 2 light chains of S100A10/p11 and 2 heavy chains of ANXA2/p36.

The protein localises to the secreted. Its subcellular location is the extracellular space. It is found in the extracellular matrix. The protein resides in the basement membrane. Calcium-regulated membrane-binding protein whose affinity for calcium is greatly enhanced by anionic phospholipids. It binds two calcium ions with high affinity. This is Annexin A2 (ANXA2) from Gallus gallus (Chicken).